We begin with the raw amino-acid sequence, 63 residues long: Sarcotoxin-1B (63 aa).

The signal sequence occupies residues 1–23 (MNFNKVFIFVALILAVFAGQSQA). The residue at position 62 (Arg62) is an Arginine amide.

The protein belongs to the cecropin family.

The protein localises to the secreted. In terms of biological role, sarcotoxins, which are potent bactericidal proteins, are produced in response to injury. They are cytotoxic to both Gram-positive and Gram-negative bacteria. This chain is Sarcotoxin-1B, found in Sarcophaga peregrina (Flesh fly).